The primary structure comprises 91 residues: Alpha-elapitoxin-Oh2b (91 aa).

The signal sequence occupies residues 1 to 21 (MKTLLLTLVVMTIVCLDLGYT). 5 cysteine pairs are disulfide-bonded: Cys-24-Cys-41, Cys-34-Cys-62, Cys-47-Cys-51, Cys-66-Cys-77, and Cys-78-Cys-83.

This sequence belongs to the three-finger toxin family. Long-chain subfamily. Type II alpha-neurotoxin sub-subfamily. As to quaternary structure, monomer. As to expression, expressed by the venom gland.

It localises to the secreted. In terms of biological role, binds with high affinity to muscular (alpha-1/CHRNA1) and neuronal (alpha-7/CHRNA7) nicotinic acetylcholine receptor (nAChR) and inhibits acetylcholine from binding to the receptor, thereby impairing neuromuscular and neuronal transmission. Recombinant LNTX1 leads to a functional block of the muscle-type acetylcholine receptors. Has a cytotoxic activity. This neurotoxin is lethal. The sequence is that of Alpha-elapitoxin-Oh2b from Ophiophagus hannah (King cobra).